The chain runs to 93 residues: Cell division protein CrgA (93 aa).

2 helical membrane-spanning segments follow: residues 31–51 (VWFVALFIGLMLIGLVWLMVF) and 70–90 (LGPWNYAIAFAFMITGLLLTM).

It belongs to the CrgA family.

The protein resides in the cell membrane. In terms of biological role, involved in cell division. The polypeptide is Cell division protein CrgA (Mycobacterium avium (strain 104)).